A 205-amino-acid chain; its full sequence is MELNGVRVSRETQGRLQHFAELFQKWAKTINLVAPSTVDDLWRRHIADSAQIFQLHPKPARWVDLGSGGGFPGIITAILLAEQKDGHVDLVESNQKKAAFLRVCLRECEARGAVHAVRIEEAPKIVADCDVISARALAELDMLLDYAAPWVERNENLRLLLHKGRDYEREVHKARGRWEFDLVKHNSVVESDSVILELTRPRRRI.

S-adenosyl-L-methionine-binding positions include Gly-66, Phe-71, 119–120 (IE), and Arg-135.

This sequence belongs to the methyltransferase superfamily. RNA methyltransferase RsmG family.

Its subcellular location is the cytoplasm. The enzyme catalyses guanosine(527) in 16S rRNA + S-adenosyl-L-methionine = N(7)-methylguanosine(527) in 16S rRNA + S-adenosyl-L-homocysteine. Functionally, specifically methylates the N7 position of guanine in position 527 of 16S rRNA. The protein is Ribosomal RNA small subunit methyltransferase G of Rhizobium rhizogenes (strain K84 / ATCC BAA-868) (Agrobacterium radiobacter).